The chain runs to 563 residues: UvrABC system protein C (563 aa).

Residues 12–87 enclose the GIY-YIG domain; sequence NKSGVYIFKK…IYKYKPKYNA (76 aa). The UVR domain occupies 194 to 229; sequence SNVISFIKLKMEQHARLLDFENAAKYRDILLNFNKV.

This sequence belongs to the UvrC family. In terms of assembly, interacts with UvrB in an incision complex.

The protein localises to the cytoplasm. Its function is as follows. The UvrABC repair system catalyzes the recognition and processing of DNA lesions. UvrC both incises the 5' and 3' sides of the lesion. The N-terminal half is responsible for the 3' incision and the C-terminal half is responsible for the 5' incision. In Fervidobacterium nodosum (strain ATCC 35602 / DSM 5306 / Rt17-B1), this protein is UvrABC system protein C.